A 663-amino-acid polypeptide reads, in one-letter code: A-type ATP synthase subunit I (663 aa).

7 helical membrane passes run 376–396 (FFFGFMLTDFLYGLIVGIVAA), 412–432 (FAYILLWSAFFTMLLGALFGS), 468–488 (LAALAIGLAHLFLGYTLGFVI), 497–517 (GAVFEQLPWMIIIIGVALLAS), 534–554 (IALFAVGELVINGGLAALMII), 568–588 (ARLMALALATGGIAMVINVLV), and 589–609 (GMVWAIKFLYIGPIIGLIIFF).

This sequence belongs to the V-ATPase 116 kDa subunit family. As to quaternary structure, has multiple subunits with at least A(3), B(3), C, D, E, F, H, I and proteolipid K(x).

Its subcellular location is the cell membrane. Functionally, component of the A-type ATP synthase that produces ATP from ADP in the presence of a proton gradient across the membrane. The sequence is that of A-type ATP synthase subunit I from Thermococcus kodakarensis (strain ATCC BAA-918 / JCM 12380 / KOD1) (Pyrococcus kodakaraensis (strain KOD1)).